The following is a 170-amino-acid chain: Co-chaperone protein HscB homolog (170 aa).

One can recognise a J domain in the interval 5-79; the sequence is DHFSLFGLPA…RARYLCEQAG (75 aa).

It belongs to the HscB family. As to quaternary structure, interacts with HscA and stimulates its ATPase activity.

Its function is as follows. Co-chaperone involved in the maturation of iron-sulfur cluster-containing proteins. Seems to help targeting proteins to be folded toward HscA. This is Co-chaperone protein HscB homolog from Bordetella parapertussis (strain 12822 / ATCC BAA-587 / NCTC 13253).